The sequence spans 4043 residues: Polyketide synthase-nonribosomal peptide synthetase (4043 aa).

In terms of domain architecture, Ketosynthase family 3 (KS3) spans 8–446; sequence SEPIAIIGTG…GANSHAILES (439 aa). Active-site for beta-ketoacyl synthase activity residues include C181, H320, and H366. Positions 557–877 are acyl transferase; that stretch reads VFTGQGAQWA…SRGNSDVEAF (321 aa). The interval 944-1078 is N-terminal hotdog fold; the sequence is NELLGRQVLD…CRLRITVGDS (135 aa). The 303-residue stretch at 944 to 1246 folds into the PKS/mFAS DH domain; it reads NELLGRQVLD…TQPLSSPTEA (303 aa). The interval 945–1243 is dehydratase (DH) domain; the sequence is ELLGRQVLDG…GLQTQPLSSP (299 aa). H976 (proton acceptor; for dehydratase activity) is an active-site residue. The segment at 1093-1246 is C-terminal hotdog fold; sequence LLEVESDRFY…TQPLSSPTEA (154 aa). D1154 serves as the catalytic Proton donor; for dehydratase activity. Positions 1400–1585 are methyltransferase (MT) domain; the sequence is RYTKYLAAMA…GIETAIPHHD (186 aa). Positions 2115–2288 are ketoreductase (KR)domain; sequence TYWLVGLTGG…NASAVHIGAI (174 aa). A Carrier 1 domain is found at 2394 to 2475; that stretch reads SSSADIYDII…EMVTQAQELL (82 aa). Residues 2395–2472 form a peptidyl carrier protein region; that stretch reads SSADIYDIIS…TVGEMVTQAQ (78 aa). S2435 carries the O-(pantetheine 4'-phosphoryl)serine modification. Disordered regions lie at residues 2476-2575 and 2587-2630; these read PKEL…DPSR and EKHL…SQII. Polar residues-rich tracts occupy residues 2494–2512 and 2520–2534; these read PKNT…QLQN and ALSQ…NMIK. A compositionally biased stretch (basic and acidic residues) spans 2537 to 2550; the sequence is PPKEAEAKQPRPEV. The span at 2617-2627 shows a compositional bias: low complexity; that stretch reads TSSSSSSTSAS. Positions 2640-3069 are condensation; that stretch reads KSVPMAFGQS…NPALRLNVPP (430 aa). Positions 3102-3502 are adenylation; the sequence is EIVERYPTHV…EGNLILGGRI (401 aa). In terms of domain architecture, Carrier 2 spans 3617 to 3697; the sequence is TDESPSMAKM…GMVSLIDHSE (81 aa). The interval 3622–3694 is thiolation; the sequence is SMAKMRDVWA…SLTGMVSLID (73 aa). O-(pantetheine 4'-phosphoryl)serine is present on S3657. Positions 3735–3954 are reductase-like; the sequence is LTGATGFLGR…DFVSADRVAM (220 aa).

In the C-terminal section; belongs to the NRP synthetase family.

It participates in mycotoxin biosynthesis. Its function is as follows. Hybrid PKS-NRPS synthetase; part of the gene cluster that mediates the biosynthesis of the mycotoxins cytochalasins E and K. The hybrid PKS-NRPS synthetase ccsA and the enoyl reductase ccsC are responsible for fusion of phenylalanine with an octaketide backbone and subsequent release of the stable tetramic acid precursor. The polyketide synthase module (PKS) of the PKS-NRPS ccsA is responsible for the synthesis of the octaketide backbone. The downstream nonribosomal peptide synthetase (NRPS) amidates the carboxyl end of the octaketide with a phenylalanine. A reductase-like domain (R) at the C-terminus catalyzes the reductive release of the polyketide-amino acid intermediate. Because ccsA lacks a designated enoylreductase (ER) domain, the required activity is provided the enoyl reductase ccsC. Upon formation of the 11-membered carbocycle-fused perhydroisoindolone intermediate, a number of oxidative steps are required to afford the final cytochalasin E and K, including two hydroxylations at C17 and C18, one alcohol oxidation at C17, one epoxidation at C6 and C7 and two Baeyer-Villiger oxidations. The oxidative modification at C17, C18 and the C6-C7 epoxidation are likely to be catalyzed by the two cytochrome P450 oxygenases ccsD and ccsG. CcsD may be responsible for the epoxidation of the C6-C7 double bond. CcsG may be responsible for the successive oxidative modifications at C17 and C18. The double Baeyer-Villiger oxidations of ketocytochalasin to precytochalasin and cytochalasin Z(16) are among the final steps leading to cytochalasin E and K and are catalyzed by ccsB. The first oxygen insertion step follows that of the classic BVMO mechanism, generating the ester precytochalasin. Release of precytochalasin into an aqueous environment can generate the shunt product iso-precytochalasin through spontaneous isomerization. Alternatively, precytochalasin can undergo further oxidation by ccsB to yield the in-line carbonate-containing cytochalasin Z(16). Cytochalasin Z(16) is a precursor to cytochalasin E and cytochalasin K, whereas iso-precytochalasin is a precursor to cytochalasin Z(17) and rosellichalasin. The hydrolyase ccsE may catalyze hydrolysis of epoxide bond in cytochalasin E to afford cytochalasin K. The function of ccsF has not been assigned but it may play a role in post-PKS-NRPS biosynthetic step, resistance or transport of cytochalasins and related PKS-NRPS products. The chain is Polyketide synthase-nonribosomal peptide synthetase from Aspergillus clavatus (strain ATCC 1007 / CBS 513.65 / DSM 816 / NCTC 3887 / NRRL 1 / QM 1276 / 107).